Reading from the N-terminus, the 753-residue chain is Oligopeptide transporter 5 (753 aa).

Helical transmembrane passes span 56-76, 80-100, 132-152, 163-183, 224-244, 296-316, 368-388, 432-452, 461-481, 506-528, 544-564, 583-603, 615-635, 662-682, and 695-715; these read TWFL…FFGY, PLTV…KLMA, ITIF…LTIV, AAAM…AGMF, FFLI…YLFP, FFAI…ILPI, YLSI…TATI, WWFV…CEGF, WGLL…GVIL, PLAN…YFVG, FIVQ…TTWW, PWTC…GIIG, PGMN…WFFA, AKAV…YYIF, and ILSA…YFAL.

It belongs to the oligopeptide OPT transporter (TC 2.A.67.1) family. As to expression, expressed predominantly in flowers, and at a very low level in leaves and roots.

The protein resides in the membrane. Functionally, involved in the translocation of tetra- and pentapeptides across the cellular membrane in an energy-dependent manner. This Arabidopsis thaliana (Mouse-ear cress) protein is Oligopeptide transporter 5 (OPT5).